The chain runs to 200 residues: 3-isopropylmalate dehydratase small subunit (200 aa).

Belongs to the LeuD family. LeuD type 1 subfamily. In terms of assembly, heterodimer of LeuC and LeuD.

It catalyses the reaction (2R,3S)-3-isopropylmalate = (2S)-2-isopropylmalate. It participates in amino-acid biosynthesis; L-leucine biosynthesis; L-leucine from 3-methyl-2-oxobutanoate: step 2/4. In terms of biological role, catalyzes the isomerization between 2-isopropylmalate and 3-isopropylmalate, via the formation of 2-isopropylmaleate. The protein is 3-isopropylmalate dehydratase small subunit of Campylobacter jejuni (strain RM1221).